A 208-amino-acid polypeptide reads, in one-letter code: Translation initiation factor 2 subunit beta (208 aa).

One can recognise a TRAM domain in the interval 145–203 (VIEEGETYELRIESVGSKGDGIAKVDKYLIFVPNTSKGEIVKAKVKKISGTLAFAEIVE).

The protein belongs to the eIF-2-beta/eIF-5 family. Heterotrimer composed of an alpha, a beta and a gamma chain.

Its function is as follows. eIF-2 functions in the early steps of protein synthesis by forming a ternary complex with GTP and initiator tRNA. The sequence is that of Translation initiation factor 2 subunit beta from Methanothrix thermoacetophila (strain DSM 6194 / JCM 14653 / NBRC 101360 / PT) (Methanosaeta thermophila).